We begin with the raw amino-acid sequence, 286 residues long: Putative L-ribulose-5-phosphate 3-epimerase SgbU (286 aa).

The protein belongs to the L-ribulose-5-phosphate 3-epimerase family.

The catalysed reaction is L-ribulose 5-phosphate = L-xylulose 5-phosphate. Its function is as follows. Catalyzes the isomerization of L-xylulose-5-phosphate to L-ribulose-5-phosphate. The sequence is that of Putative L-ribulose-5-phosphate 3-epimerase SgbU (sgbU) from Haemophilus influenzae (strain ATCC 51907 / DSM 11121 / KW20 / Rd).